Reading from the N-terminus, the 605-residue chain is Capsid scaffolding protein (605 aa).

Catalysis depends on charge relay system residues His48, Ser116, and His139. The disordered stretch occupies residues 235 to 274 (ASDAPDLQKPDKALQSPPPASTDPATMLSGNAGEGATACG). Residues 281–300 (QDLISVPRNTFMTLLQTNLD) are interaction with pAP. 2 disordered regions span residues 403–432 (DYVPAPSRSNKRKRDPEEDEEGGGLFPGED) and 489–588 (PHQS…KSVS). A Nuclear localization signal motif is present at residues 410–416 (RSNKRKR). Over residues 568 to 579 (ASASGVAQSKEP) the composition is skewed to polar residues. The interaction with major capsid protein stretch occupies residues 585 to 605 (KSVSAHLKSIFCEELLNKRVA).

It belongs to the herpesviridae capsid scaffolding protein family. Homomultimer. Interacts with major capsid protein. In terms of assembly, exists in a monomer-dimer equilibrium with the dimer being the active species. Post-translationally, capsid scaffolding protein is cleaved by assemblin after formation of the spherical procapsid. As a result, the capsid obtains its mature, icosahedral shape. Cleavages occur at two or more sites: release (R-site) and maturation (M-site).

The protein localises to the host cytoplasm. Its subcellular location is the host nucleus. It catalyses the reaction Cleaves -Ala-|-Ser- and -Ala-|-Ala- bonds in the scaffold protein.. In terms of biological role, acts as a scaffold protein by binding major capsid protein in the cytoplasm, inducing the nuclear localization of both proteins. Multimerizes in the nucleus such as major capsid protein forms the icosahedral T=16 capsid. Autocatalytic cleavage releases the assembly protein, and subsequently abolishes interaction with major capsid protein. Cleavages products are evicted from the capsid before or during DNA packaging. Protease that plays an essential role in virion assembly within the nucleus. Catalyzes the cleavage of the assembly protein after formation of the spherical procapsid. By that cleavage, the capsid matures and gains its icosahedral shape. The cleavage sites seem to include -Ala-Ser-, -Ala-Ala-, as well as Ala-Thr bonds. Assemblin and cleavages products are evicted from the capsid before or during DNA packaging. Functionally, plays a major role in capsid assembly. Acts as a scaffold protein by binding major capsid protein. Multimerizes in the nucleus such as major capsid protein forms the icosahedral T=16 capsid. Cleaved by assemblin after capsid completion. The cleavages products are evicted from the capsid before or during DNA packaging. The chain is Capsid scaffolding protein from Homo sapiens (Human).